We begin with the raw amino-acid sequence, 393 residues long: tRNA (guanine-N(7)-)-methyltransferase (393 aa).

Positions 124, 149, and 176 each coordinate S-adenosyl-L-methionine. Asp-232 is a substrate binding site.

This sequence belongs to the class I-like SAM-binding methyltransferase superfamily. TrmB family.

It catalyses the reaction guanosine(46) in tRNA + S-adenosyl-L-methionine = N(7)-methylguanosine(46) in tRNA + S-adenosyl-L-homocysteine. It functions in the pathway tRNA modification; N(7)-methylguanine-tRNA biosynthesis. Catalyzes the formation of N(7)-methylguanine at position 46 (m7G46) in tRNA. The sequence is that of tRNA (guanine-N(7)-)-methyltransferase from Helicobacter pylori (strain ATCC 700392 / 26695) (Campylobacter pylori).